The primary structure comprises 65 residues: Myotoxin-1 (65 aa).

The first 22 residues, 1–22 (MKILYLLFAFLFLAFLSEPGNA), serve as a signal peptide directing secretion. 3 cysteine pairs are disulfide-bonded: C26–C58, C33–C52, and C40–C59.

The protein belongs to the crotamine-myotoxin family. In terms of assembly, monomer. In terms of tissue distribution, expressed by the venom gland.

It is found in the secreted. In terms of biological role, cationic peptide that possesses multiple functions. It acts as a cell-penetrating peptide (CPP), and as a potent voltage-gated potassium channel (Kv) inhibitor. It exhibits antimicrobial activities, hind limb paralysis, and severe muscle necrosis by a non-enzymatic mechanism. In Crotalus durissus terrificus (South American rattlesnake), this protein is Myotoxin-1.